Consider the following 78-residue polypeptide: Surfactant-associated protein 2 (78 aa).

Residues 1–19 form the signal peptide; it reads MGAGLPLVLLLTLVGSSQG. Residue Asn-37 is glycosylated (N-linked (GlcNAc...) asparagine).

In terms of processing, N-glycosylated.

The protein localises to the secreted. It localises to the cytoplasmic vesicle. The protein resides in the secretory vesicle. It is found in the golgi apparatus. Its function is as follows. Putative surfactant protein. In Bos taurus (Bovine), this protein is Surfactant-associated protein 2 (SFTA2).